We begin with the raw amino-acid sequence, 110 residues long: MDGTLFPGDDDLAIPATEFFSTKAAKKPEAKREAIVKADEDDNEETLKQRLTNLEKKITNVTTKFEQIEKCCKRNDEVLFRLENHAETLRAAMISLAKKIDVQTGRRPYE.

A coiled-coil region spans residues 36-101 (VKADEDDNEE…AMISLAKKID (66 aa)).

The protein belongs to the orthopoxvirus OPG154 protein family. As to quaternary structure, homohexamers, covalently linked. Interacts with OPG144 and OPG153.

The protein localises to the virion. Functionally, structural protein involved in the envelopment of mature virion (MV) to form the wrapped virion (WV). The wrapping consists of the addition of Golgi membranes to the mature virion. Participates in mature virion (MV) movement within the infected cell. May play an indirect role in MV-cell fusion. This Vaccinia virus (strain Western Reserve) (VACV) protein is Protein OPG154 (OPG154).